The primary structure comprises 754 residues: 5-methyltetrahydropteroyltriglutamate--homocysteine methyltransferase (754 aa).

Residues 15–18 (RELK) and Lys114 contribute to the 5-methyltetrahydropteroyltri-L-glutamate site. L-homocysteine is bound by residues 430–432 (IGS) and Glu483. L-methionine contacts are provided by residues 430 to 432 (IGS) and Glu483. 5-methyltetrahydropteroyltri-L-glutamate-binding positions include 514–515 (RC) and Trp560. An L-homocysteine-binding site is contributed by Asp598. Asp598 contacts L-methionine. A 5-methyltetrahydropteroyltri-L-glutamate-binding site is contributed by Glu604. The Zn(2+) site is built by His641, Cys643, and Glu665. Catalysis depends on His694, which acts as the Proton donor. Cys726 contributes to the Zn(2+) binding site.

This sequence belongs to the vitamin-B12 independent methionine synthase family. The cofactor is Zn(2+).

It catalyses the reaction 5-methyltetrahydropteroyltri-L-glutamate + L-homocysteine = tetrahydropteroyltri-L-glutamate + L-methionine. It functions in the pathway amino-acid biosynthesis; L-methionine biosynthesis via de novo pathway; L-methionine from L-homocysteine (MetE route): step 1/1. Catalyzes the transfer of a methyl group from 5-methyltetrahydrofolate to homocysteine resulting in methionine formation. This Campylobacter jejuni subsp. jejuni serotype O:23/36 (strain 81-176) protein is 5-methyltetrahydropteroyltriglutamate--homocysteine methyltransferase.